The chain runs to 211 residues: Thiamine-phosphate synthase (211 aa).

4-amino-2-methyl-5-(diphosphooxymethyl)pyrimidine is bound by residues 37-41 (QLRIK) and Asn-69. Positions 70 and 89 each coordinate Mg(2+). Ser-108 contacts 4-amino-2-methyl-5-(diphosphooxymethyl)pyrimidine. A 2-[(2R,5Z)-2-carboxy-4-methylthiazol-5(2H)-ylidene]ethyl phosphate-binding site is contributed by 134-136 (TQT). Lys-137 lines the 4-amino-2-methyl-5-(diphosphooxymethyl)pyrimidine pocket. 2-[(2R,5Z)-2-carboxy-4-methylthiazol-5(2H)-ylidene]ethyl phosphate contacts are provided by residues Gly-166 and 186 to 187 (VS).

It belongs to the thiamine-phosphate synthase family. The cofactor is Mg(2+).

It catalyses the reaction 2-[(2R,5Z)-2-carboxy-4-methylthiazol-5(2H)-ylidene]ethyl phosphate + 4-amino-2-methyl-5-(diphosphooxymethyl)pyrimidine + 2 H(+) = thiamine phosphate + CO2 + diphosphate. The catalysed reaction is 2-(2-carboxy-4-methylthiazol-5-yl)ethyl phosphate + 4-amino-2-methyl-5-(diphosphooxymethyl)pyrimidine + 2 H(+) = thiamine phosphate + CO2 + diphosphate. It carries out the reaction 4-methyl-5-(2-phosphooxyethyl)-thiazole + 4-amino-2-methyl-5-(diphosphooxymethyl)pyrimidine + H(+) = thiamine phosphate + diphosphate. Its pathway is cofactor biosynthesis; thiamine diphosphate biosynthesis; thiamine phosphate from 4-amino-2-methyl-5-diphosphomethylpyrimidine and 4-methyl-5-(2-phosphoethyl)-thiazole: step 1/1. In terms of biological role, condenses 4-methyl-5-(beta-hydroxyethyl)thiazole monophosphate (THZ-P) and 2-methyl-4-amino-5-hydroxymethyl pyrimidine pyrophosphate (HMP-PP) to form thiamine monophosphate (TMP). This chain is Thiamine-phosphate synthase, found in Salmonella choleraesuis (strain SC-B67).